The primary structure comprises 744 residues: MAGRTMQAARCPTDELSLSNCAVVNEKDYQSGQHVMVRTSPNHKYIFTLRTHPSVVPGCIAFSLPQRKWAGLSIGQDIEVALYSFDKAKQCIGTMTIEIDFLQKKNIDSNPYDTDKMAAEFIQQFNHQAFSVGQQLVFSFNDKLFGLLVKDIEAMDPSILKGEPASGKRQKIEVGLVVGNSQVAFEKAENSSLNLIGKAKTKENRQSIINPDWNFEKMGIGGLDKEFSDIFRRAFASRVFPPEIVEQMGCKHVKGILLYGPPGCGKTLLARQIGKMLNAREPKVVNGPEILNKYVGESEANIRKLFADAEEEQRRLGANSGLHIIIFDEIDAICKQRGSMAGSTGVHDTVVNQLLSKIDGVEQLNNILVIGMTNRPDLIDEALLRPGRLEVKMEIGLPDEKGRLQILHIHTARMRGHQLLSADVDIKELAVETKNFSGAELEGLVRAAQSTAMNRHIKASTKVEVDMEKAESLQVTRGDFLASLENDIKPAFGTNQEDYASYIMNGIIKWGDPVTRVLDDGELLVQQTKNSDRTPLVSVLLEGPPHSGKTALAAKIAEESNFPFIKICSPDKMIGFSETAKCQAMKKIFDDAYKSQLSCVVVDDIERLLDYVPIGPRFSNLVLQALLVLLKKAPPQGRKLLIIGTTSRKDVLQEMEMLNAFSTTIHVPNIATGEQLLEALELLGNFKDKERTTIAQQVKGKKVWIGIKKLLMLIEMSLQMDPEYRVRKFLALMREEGASPLDFD.

Residue Lys-105 is modified to N6-acetyllysine. Residue Ser-207 is modified to Phosphoserine. Tyr-259 bears the Phosphotyrosine mark. Residues Asn-505 to Trp-510 and Pro-545 to Leu-552 contribute to the ATP site. Thr-550 contributes to the Mg(2+) binding site. The residue at position 569 (Ser-569) is a Phosphoserine; by CDK16.

Belongs to the AAA ATPase family. As to quaternary structure, homohexamer. Interacts with GABARAP and GABARAPL2. Interacts with GRIA2. Interacts with PLK2, leading to disrupt the interaction with GRIA2. Interacts with MUSK; may regulate MUSK endocytosis and activity. Interacts with CDK16. Mg(2+) serves as cofactor. In terms of processing, phosphorylation at Ser-569 interferes with homohexamerization. In terms of tissue distribution, detected in brain (at protein level).

Its subcellular location is the cytoplasm. It carries out the reaction ATP + H2O = ADP + phosphate + H(+). Its function is as follows. Required for vesicle-mediated transport. Catalyzes the fusion of transport vesicles within the Golgi cisternae. Is also required for transport from the endoplasmic reticulum to the Golgi stack. Seems to function as a fusion protein required for the delivery of cargo proteins to all compartments of the Golgi stack independent of vesicle origin. Interaction with AMPAR subunit GRIA2 leads to influence GRIA2 membrane cycling. In Rattus norvegicus (Rat), this protein is Vesicle-fusing ATPase (Nsf).